Reading from the N-terminus, the 360-residue chain is Proline-rich protein 11 (360 aa).

Disordered regions lie at residues 20–43 (KKKE…SPER) and 174–201 (PPTL…PPLA). Phosphothreonine is present on Thr-33. At Ser-40 the chain carries Phosphoserine. Residues 175 to 201 (PTLPQPASHFPPPPPPPPLPPPPPPLA) are compositionally biased toward pro residues. Residues 285–291 (LITPGKS) carry the Phosphodegron motif. The residue at position 287 (Thr-287) is a Phosphothreonine. Ser-291 bears the Phosphoserine mark. Positions 296–304 (RKLLRKVDV) match the D-box motif. The short motif at 316–318 (KEN) is the KEN box element. Positions 325-330 (LTPVMT) match the Phosphodegron motif. The disordered stretch occupies residues 340 to 360 (AHPRSPTPTLPLSTSSFDEQN). Ser-344 carries the post-translational modification Phosphoserine. 2 positions are modified to phosphothreonine: Thr-346 and Thr-348. Over residues 349–360 (LPLSTSSFDEQN) the composition is skewed to low complexity.

Ubiquitinated. Rapidly degraded by the proteasome; degradation may involve FBXW7-specific phosphorylated phosphodegron motifs. In terms of tissue distribution, ubiquitously expressed.

Its subcellular location is the cytoplasm. It is found in the nucleus. Plays a critical role in cell cycle progression. The sequence is that of Proline-rich protein 11 (PRR11) from Homo sapiens (Human).